The chain runs to 142 residues: MTTPSMEDYIEQIYMLIEEKGYARVSDIAEALAVHPSSVTKMVQKLDKDEYLIYEKYRGLVLTSKGKKIGKRLVYRHELLEQFLRIIGVDEEKIYNDVEGIEHHLSWNSIDRIGDLVQYFEEDDARKKDLKSIQKKTEHHNQ.

In terms of domain architecture, HTH dtxR-type spans Met1–Thr63. Positions 8, 11, 77, 99, 102, and 103 each coordinate Cd(2+). Mn(2+) is bound by residues Asp8, Glu11, His77, Glu99, Glu102, and His103.

Belongs to the DtxR/MntR family. As to quaternary structure, homodimer.

It localises to the cytoplasm. Its activity is regulated as follows. DNA binding is strongly activated by Mn(2+) and Cd(2+), but it is poorly activated by non-cognate metal cations, including Co(2+), Fe(2+), Ni(2+), Ca(2+) and Zn(2+). In the strict absence of divalent transition metal ions, MntR has a low affinity for DNA. In terms of biological role, central regulator of manganese homeostasis that regulates the expression of both manganese uptake and efflux systems. In the presence of high levels of manganese, it mediates repression of the manganese uptake systems MntH and MntABCD and activation of the efflux systems MneP and MneS. Binds with high affinity to the regulatory regions of its target genes. The manganese concentration required for activation of efflux is higher than that for repression of uptake. The sequence is that of HTH-type transcriptional regulator MntR from Bacillus subtilis (strain 168).